A 214-amino-acid polypeptide reads, in one-letter code: Adenylate kinase (214 aa).

10-15 (GAGKGT) is an ATP binding site. Residues 30–59 (STGDLLREEIANNTELGKQAKKLIDGGNLV) form an NMP region. AMP contacts are provided by residues threonine 31, arginine 36, 57–59 (NLV), 83–86 (GFPR), and glutamine 90. The tract at residues 124-161 (LRRQCKNCGNIFNLRFIKNFDGKCPKCGSTDIYQRADD) is LID. Position 125 (arginine 125) interacts with ATP. The Zn(2+) site is built by cysteine 128 and cysteine 131. Residue 134-135 (IF) participates in ATP binding. Zn(2+)-binding residues include cysteine 147 and cysteine 150. 2 residues coordinate AMP: arginine 158 and arginine 169. Residue lysine 197 coordinates ATP.

This sequence belongs to the adenylate kinase family. As to quaternary structure, monomer.

The protein resides in the cytoplasm. The enzyme catalyses AMP + ATP = 2 ADP. It participates in purine metabolism; AMP biosynthesis via salvage pathway; AMP from ADP: step 1/1. In terms of biological role, catalyzes the reversible transfer of the terminal phosphate group between ATP and AMP. Plays an important role in cellular energy homeostasis and in adenine nucleotide metabolism. In Elusimicrobium minutum (strain Pei191), this protein is Adenylate kinase.